The following is a 156-amino-acid chain: MKVLEGGLAAPNAKVAVVVARFNSFINDSLVEGAVDALKRIGQVKDENITLVRVPGAYELPLAVRRLADSKKYDAIVALGTVIRGGTAHFEYVAGGASNGIGHVSLESNVPVAFGVLTTENIEQAIDRAGTKSGNKGAEAALVALEMVNLLAQINA.

Residues F22, 57–59, and 81–83 contribute to the 5-amino-6-(D-ribitylamino)uracil site; these read AYE and TVI. 86–87 lines the (2S)-2-hydroxy-3-oxobutyl phosphate pocket; sequence GT. H89 acts as the Proton donor in catalysis. Residue F114 coordinates 5-amino-6-(D-ribitylamino)uracil. (2S)-2-hydroxy-3-oxobutyl phosphate is bound at residue R128.

This sequence belongs to the DMRL synthase family. As to quaternary structure, forms an icosahedral capsid composed of 60 subunits, arranged as a dodecamer of pentamers.

It catalyses the reaction (2S)-2-hydroxy-3-oxobutyl phosphate + 5-amino-6-(D-ribitylamino)uracil = 6,7-dimethyl-8-(1-D-ribityl)lumazine + phosphate + 2 H2O + H(+). Its pathway is cofactor biosynthesis; riboflavin biosynthesis; riboflavin from 2-hydroxy-3-oxobutyl phosphate and 5-amino-6-(D-ribitylamino)uracil: step 1/2. Functionally, catalyzes the formation of 6,7-dimethyl-8-ribityllumazine by condensation of 5-amino-6-(D-ribitylamino)uracil with 3,4-dihydroxy-2-butanone 4-phosphate. This is the penultimate step in the biosynthesis of riboflavin. This chain is 6,7-dimethyl-8-ribityllumazine synthase, found in Mannheimia succiniciproducens (strain KCTC 0769BP / MBEL55E).